We begin with the raw amino-acid sequence, 957 residues long: MAAQKIRSANTNGLPRCKSEGALIDFSGVPDPNLSDVKVLSPSSLRVDNPASLDNVKEVVAIKDYCPNNFTTLKFSKGEHLYVLDTSGGEWWYAHNTTEMGYIPSSYVQPLNYRDSCLSDSGMIDGLLESVDEGVKELDLLGDWTETISQDPIKKCHNNPFLRPSVSNPFLNGPLMPQIHALETGNSVDLLLFDPLAPSHAFSSETSTDVLLDLLPNNTQNEVAVPVKRDNPFFRSKRSYSLSELSVLQAKSENPTTGSFFAGLKSPAPEQFQSREDFRTAWLNHRKLARSCHDLDLLGQNPGWGQTQPVETSIVCRLDSSGGAVQLPDTNISIHVPEKHVASGETQQISLKALLDPPLELNNDKCTTVSPVLEIKLSNMDVQSPLTLELRISVALGGNASALNMVGIKCLRSDAKEGPYNPVTQIYIYGDTVQVKLDNLEPVMYVVMVAQGQGIVSPSSVWEYINKKVTVGLYGPKHIHPSFKAVLAIFGHDCAPKTLLVNEVGQQANNSAPVTLQLWGKQQFVLPKPQDLQLCLFSNMTNYRVDAGDQGKMVRGFQLKLGKVSRLIFPIICQEPAQLSDFTLRVQVRDEVGGVLSQYCVQTPRPPPKTGNKSTGPRRFLKKKEVGKIVLSPLAVTCKYPTFQDRPVTSLKYGKLLKTVVRQSKNPYLLEYKKGDVIGLLSEEKIRLKGQLWNKEWYIGYYQGKLGLVHAKNVLVVGKVKPSFFSGPELTTGLLLEQMLRPCKFLTYIYASVRTLLMENIGSWRCFADALGYGNLPLSYFCRVELESETERVASVLEKLKEECNSEGKEKKSFQKELIMALLKIDCQGLVVRLIQDFVLLTTAVEVASRWRELAEKLARVSKQQMDGYEAPHRDRNGALDSEAMWKPAYDFLLTWSAQIGESYRDVIQELHTGLDKMRSPITKRWKHLTGTLILVNSLDILRAAAFSTQEPEDCII.

In terms of domain architecture, SH3 1 spans 54-113; sequence DNVKEVVAIKDYCPNNFTTLKFSKGEHLYVLDTSGGEWWYAHNTTEMGYIPSSYVQPLNY. Residues 312 to 449 form the ZU5 domain; sequence TSIVCRLDSS…LEPVMYVVMV (138 aa). The 71-residue stretch at 649–719 folds into the SH3 2 domain; it reads TSLKYGKLLK…HAKNVLVVGK (71 aa).

In terms of assembly, homodimer or homooligomer.

The protein localises to the membrane. The protein resides in the clathrin-coated pit. Its subcellular location is the cytoplasmic vesicle. It localises to the clathrin-coated vesicle. It is found in the nucleus. Its function is as follows. Possible role in regulating endocytosis of the transferrin receptor at the plasma membrane. Alternatively, may function as a negative regulator of the amino acid-induced TOR signaling by inhibiting the formation of active Rag GTPase complexes. Preferentially binds inactive Rag GTPase complexes and prevents their interaction with the mTORC1 complex inhibiting its relocalization to lysosomes and its activation. Thereby, may indirectly regulate cell growth, proliferation and autophagy. The polypeptide is SH3 domain-binding protein 4 (sh3bp4) (Xenopus tropicalis (Western clawed frog)).